Consider the following 272-residue polypeptide: Phosphate import ATP-binding protein PstB (272 aa).

The ABC transporter domain occupies 18 to 257 (VSMQNVTISY…FNDTQSIFNS (240 aa)). 50–57 (GPSGCGKS) lines the ATP pocket.

The protein belongs to the ABC transporter superfamily. Phosphate importer (TC 3.A.1.7) family. The complex is composed of two ATP-binding proteins (PstB), two transmembrane proteins (PstC and PstA) and a solute-binding protein (PstS).

It localises to the cell inner membrane. It carries out the reaction phosphate(out) + ATP + H2O = ADP + 2 phosphate(in) + H(+). In terms of biological role, part of the ABC transporter complex PstSACB involved in phosphate import. Responsible for energy coupling to the transport system. This Synechococcus sp. (strain CC9902) protein is Phosphate import ATP-binding protein PstB.